Reading from the N-terminus, the 372-residue chain is Alpha-parvin (372 aa).

Positions 1–11 are enriched in low complexity; that stretch reads MATSPQKSPSV. Positions 1 to 44 are disordered; that stretch reads MATSPQKSPSVPKSPTPKSPPSRKKDDSFLGKLGGTLARRKKAK. The residue at position 2 (alanine 2) is an N-acetylalanine. 3 positions are modified to phosphoserine: serine 8, serine 14, and serine 19. The tract at residues 21–25 is interaction with ARHGAP31; that stretch reads PSRKK. 2 positions are modified to phosphoserine: serine 28 and serine 62. Calponin-homology (CH) domains are found at residues 95-202 and 262-369; these read QELM…QYFR and NVVK…TKYR. The required for interaction with TESK1 and ILK stretch occupies residues 223–372; that stretch reads GILQSRQIQE…NLFTKYRNVE (150 aa).

This sequence belongs to the parvin family. In terms of assembly, component of the heterotrimeric IPP (ILK-PINCH-PARVIN) complex composed of ILK, LIMS1/PINCH and PARVA; the complex binds to F-actin via the C-terminal tail of LIMS1 and the N-terminal region of PARVA, promoting F-actin filament bundling. Interacts with TGFB1I1. Interacts with ARHGAP31. Interacts with the actin cytoskeleton. Interacts (via C-terminus) with TESK1 (via C-terminus); the interaction inhibits TESK1 kinase activity. Interacts with PXN/PAXILLIN (via LD motif 4). In terms of tissue distribution, widely expressed.

Its subcellular location is the cell junction. The protein localises to the focal adhesion. It is found in the cell membrane. It localises to the cytoplasm. The protein resides in the cytoskeleton. Its subcellular location is the myofibril. The protein localises to the sarcomere. It is found in the z line. In terms of biological role, plays a role in sarcomere organization and in smooth muscle cell contraction. Required for normal development of the embryonic cardiovascular system, and for normal septation of the heart outflow tract. Plays a role in sprouting angiogenesis and is required for normal adhesion of vascular smooth muscle cells to endothelial cells during blood vessel development. Plays a role in the reorganization of the actin cytoskeleton, formation of lamellipodia and ciliogenesis. Plays a role in the establishment of cell polarity, cell adhesion, cell spreading, and directed cell migration. Within the IPP (ILK-PINCH-PARVIN) complex, binds to F-actin, promoting F-actin bundling, a process required to generate force for actin cytoskeleton reorganization and subsequent dynamic cell adhesion events such as cell spreading and migration. In Rattus norvegicus (Rat), this protein is Alpha-parvin (Parva).